We begin with the raw amino-acid sequence, 172 residues long: Allergen Bos d 2 (172 aa).

The first 16 residues, M1 to A16, serve as a signal peptide directing secretion. Pyrrolidone carboxylic acid is present on Q17. 2 disulfide bridges follow: C60–C64 and C79–C170.

The protein belongs to the calycin superfamily. Lipocalin family. As to expression, found exclusively in skin. Produced in sweat glands and transported to the skin surface.

The protein resides in the secreted. Its function is as follows. Probable pheromone carrier. This is Allergen Bos d 2 from Bos taurus (Bovine).